We begin with the raw amino-acid sequence, 217 residues long: Proteasome subunit beta type-9 (217 aa).

The propeptide at 1 to 18 (MLDESLEPGWLSEEVKTG) is removed in mature form. Threonine 19 serves as the catalytic Nucleophile.

It belongs to the peptidase T1B family. The 26S proteasome consists of a 20S proteasome core and two 19S regulatory subunits. The 20S proteasome core is composed of 28 subunits that are arranged in four stacked rings, resulting in a barrel-shaped structure. The two end rings are each formed by seven alpha subunits, and the two central rings are each formed by seven beta subunits. The catalytic chamber with the active sites is on the inside of the barrel. Component of the immunoproteasome, where it displaces the equivalent housekeeping subunit PSMB6. Post-translationally, autocleaved. The resulting N-terminal Thr residue of the mature subunit is responsible for the nucleophile proteolytic activity.

Its subcellular location is the cytoplasm. It is found in the nucleus. It carries out the reaction Cleavage of peptide bonds with very broad specificity.. Its function is as follows. The proteasome is a multicatalytic proteinase complex which is characterized by its ability to cleave peptides with Arg, Phe, Tyr, Leu, and Glu adjacent to the leaving group at neutral or slightly basic pH. The proteasome has an ATP-dependent proteolytic activity. This subunit is involved in antigen processing to generate class I binding peptides. This chain is Proteasome subunit beta type-9 (psmb9), found in Oncorhynchus mykiss (Rainbow trout).